A 186-amino-acid polypeptide reads, in one-letter code: Der GTPase-activating protein YihI (186 aa).

The tract at residues 42 to 77 is disordered; sequence KAREDKKKRKHKGLASGSRHSAVEEKANKLQNEIKD. Over residues 62-77 the composition is skewed to basic and acidic residues; the sequence is SAVEEKANKLQNEIKD.

This sequence belongs to the YihI family. As to quaternary structure, interacts with Der.

A GTPase-activating protein (GAP) that modifies Der/EngA GTPase function. May play a role in ribosome biogenesis. The sequence is that of Der GTPase-activating protein YihI from Haemophilus influenzae (strain ATCC 51907 / DSM 11121 / KW20 / Rd).